The following is a 391-amino-acid chain: Heme A synthase (391 aa).

Helical transmembrane passes span I37 to L57, R121 to A141, L152 to S172, L186 to L206, T229 to I249, F298 to G318, L332 to A352, and W354 to A374. H300 is a heme binding site. H360 contacts heme.

It belongs to the COX15/CtaA family. Type 2 subfamily. As to quaternary structure, interacts with CtaB. It depends on heme b as a cofactor.

It localises to the cell membrane. The enzyme catalyses Fe(II)-heme o + 2 A + H2O = Fe(II)-heme a + 2 AH2. The protein operates within porphyrin-containing compound metabolism; heme A biosynthesis; heme A from heme O: step 1/1. Its function is as follows. Catalyzes the conversion of heme O to heme A by two successive hydroxylations of the methyl group at C8. The first hydroxylation forms heme I, the second hydroxylation results in an unstable dihydroxymethyl group, which spontaneously dehydrates, resulting in the formyl group of heme A. This is Heme A synthase from Cereibacter sphaeroides (strain KD131 / KCTC 12085) (Rhodobacter sphaeroides).